The chain runs to 231 residues: PIAGSMVLAAILLKLGGYGIIRMMQIMPTTKTDMFLPFIVLALWGAILANLTCLQQTDLKSLIAYSSVSHMGLVVAAIMIQTPWGLSGAMTLMIAHGFTSSALFCLANTTYERTHTRILILTRGFHNILPMATTWWLLTNLMNIAIPPTMNFTSELLIMSALFSWCPTTIILLGLSMLITASYSLHMFLSTQMGPTLLNNQTEPTHSREHLLMTLHITPLMMISMKPELIM.

The next 6 helical transmembrane spans lie at 1-21 (PIAG…YGII), 34-54 (MFLP…LTCL), 63-85 (IAYS…TPWG), 89-111 (AMTL…NTTY), 128-148 (ILPM…AIPP), and 156-176 (LLIM…LGLS).

This sequence belongs to the complex I subunit 4 family.

The protein resides in the mitochondrion membrane. The enzyme catalyses a ubiquinone + NADH + 5 H(+)(in) = a ubiquinol + NAD(+) + 4 H(+)(out). Functionally, core subunit of the mitochondrial membrane respiratory chain NADH dehydrogenase (Complex I) that is believed to belong to the minimal assembly required for catalysis. Complex I functions in the transfer of electrons from NADH to the respiratory chain. The immediate electron acceptor for the enzyme is believed to be ubiquinone. This chain is NADH-ubiquinone oxidoreductase chain 4 (MT-ND4), found in Gloydius intermedius (Central Asian pit viper).